A 93-amino-acid polypeptide reads, in one-letter code: Co-chaperonin GroES (93 aa).

This sequence belongs to the GroES chaperonin family. In terms of assembly, heptamer of 7 subunits arranged in a ring. Interacts with the chaperonin GroEL.

The protein localises to the cytoplasm. Functionally, together with the chaperonin GroEL, plays an essential role in assisting protein folding. The GroEL-GroES system forms a nano-cage that allows encapsulation of the non-native substrate proteins and provides a physical environment optimized to promote and accelerate protein folding. GroES binds to the apical surface of the GroEL ring, thereby capping the opening of the GroEL channel. This chain is Co-chaperonin GroES, found in Streptococcus gordonii.